Consider the following 595-residue polypeptide: S-(+)-linalool synthase, chloroplastic (595 aa).

A chloroplast-targeting transit peptide spans 1 to 46 (MVCHVFSSFSSSLIRVLEAPLLLPAASASSSSSSSPASRSGGRRRR). A compositionally biased stretch (low complexity) spans 27-40 (SASSSSSSSPASRS). Residues 27–54 (SASSSSSSSPASRSGGRRRRAAHVRPSP) are disordered. Arg309, Asp346, Asp350, Arg487, and Asp490 together coordinate (2E)-geranyl diphosphate. Residues Asp346 and Asp350 each contribute to the Mg(2+) site. A DDXXD motif motif is present at residues 346 to 350 (DDIFD). Mg(2+)-binding residues include Asp490, Ser494, and Glu498.

It belongs to the terpene synthase family. Tpsb subfamily. It depends on Mg(2+) as a cofactor. The cofactor is Mn(2+).

The protein localises to the plastid. Its subcellular location is the chloroplast. It carries out the reaction (2E)-geranyl diphosphate + H2O = (S)-linalool + diphosphate. It participates in secondary metabolite biosynthesis; terpenoid biosynthesis. Involved in monoterpene (C10) biosynthesis. The major product is S-(+)-linalool. Linalool production is induced by jasmonate in response to pathogen attack, it possesses antibacterial activity and is important for resistance to the bacterial blight pathogen Xanthomonas oryzae pv. oryzae (Xoo). Plants over-expressing linalool synthase display enhanced resistance to Xoo. The polypeptide is S-(+)-linalool synthase, chloroplastic (Oryza sativa subsp. japonica (Rice)).